Consider the following 1065-residue polypeptide: N-terminal acetyltransferase B complex auxiliary subunit NAA25 (1065 aa).

The stretch at 294-327 is one TPR repeat; that stretch reads VDKLRIQGRLLARANDYSAAVDVYKKILELSPDD.

This sequence belongs to the MDM20/NAA25 family. Ubiquitously expressed, with a higher expression in vascular bundles, hydathodes, leaf primordia and the base of the trichomes.

It is found in the cytoplasm. Functionally, auxiliary subunit of the NatB N-alpha-acetyltransferase complex. Required for flowering time regulation and for vegetative and reproductive plant development. The polypeptide is N-terminal acetyltransferase B complex auxiliary subunit NAA25 (Arabidopsis thaliana (Mouse-ear cress)).